The following is a 199-amino-acid chain: MEKKKHGTNSISEALKVKAAVEQETATPEPTPQSETESADKIKQLEEALAAKEAEAAANWDKVLRERADLENYRKRVQKEKEELLKYGNESLILEILPAIDNMERALEHACDESMSAIVEGIKMTLCMLQSTLKKFGVAPVDAGKGTTFDPAYHQAMNQVESSEHEPNTIVSEFQKGYLLNERLLRPALVSVATAPKEQ.

The disordered stretch occupies residues 1-40; that stretch reads MEKKKHGTNSISEALKVKAAVEQETATPEPTPQSETESAD. Residues 24-36 show a composition bias toward polar residues; it reads ETATPEPTPQSET.

It belongs to the GrpE family. In terms of assembly, homodimer.

It localises to the cytoplasm. Participates actively in the response to hyperosmotic and heat shock by preventing the aggregation of stress-denatured proteins, in association with DnaK and GrpE. It is the nucleotide exchange factor for DnaK and may function as a thermosensor. Unfolded proteins bind initially to DnaJ; upon interaction with the DnaJ-bound protein, DnaK hydrolyzes its bound ATP, resulting in the formation of a stable complex. GrpE releases ADP from DnaK; ATP binding to DnaK triggers the release of the substrate protein, thus completing the reaction cycle. Several rounds of ATP-dependent interactions between DnaJ, DnaK and GrpE are required for fully efficient folding. The polypeptide is Protein GrpE (Geotalea uraniireducens (strain Rf4) (Geobacter uraniireducens)).